A 453-amino-acid chain; its full sequence is tRNA(Ile)-lysidine synthase (453 aa).

27-32 (SGGSDS) lines the ATP pocket.

This sequence belongs to the tRNA(Ile)-lysidine synthase family.

It is found in the cytoplasm. It catalyses the reaction cytidine(34) in tRNA(Ile2) + L-lysine + ATP = lysidine(34) in tRNA(Ile2) + AMP + diphosphate + H(+). Its function is as follows. Ligates lysine onto the cytidine present at position 34 of the AUA codon-specific tRNA(Ile) that contains the anticodon CAU, in an ATP-dependent manner. Cytidine is converted to lysidine, thus changing the amino acid specificity of the tRNA from methionine to isoleucine. The polypeptide is tRNA(Ile)-lysidine synthase (Rhizobium meliloti (strain 1021) (Ensifer meliloti)).